The chain runs to 162 residues: NADH-quinone oxidoreductase subunit C (162 aa).

This sequence belongs to the complex I 30 kDa subunit family. As to quaternary structure, NDH-1 is composed of 14 different subunits. Subunits NuoB, C, D, E, F, and G constitute the peripheral sector of the complex.

It is found in the cell inner membrane. It carries out the reaction a quinone + NADH + 5 H(+)(in) = a quinol + NAD(+) + 4 H(+)(out). Its function is as follows. NDH-1 shuttles electrons from NADH, via FMN and iron-sulfur (Fe-S) centers, to quinones in the respiratory chain. The immediate electron acceptor for the enzyme in this species is believed to be ubiquinone. Couples the redox reaction to proton translocation (for every two electrons transferred, four hydrogen ions are translocated across the cytoplasmic membrane), and thus conserves the redox energy in a proton gradient. This Trichlorobacter lovleyi (strain ATCC BAA-1151 / DSM 17278 / SZ) (Geobacter lovleyi) protein is NADH-quinone oxidoreductase subunit C.